An 856-amino-acid chain; its full sequence is DNA mismatch repair protein MutS (856 aa).

623–630 (GPNMSGKS) is a binding site for ATP.

It belongs to the DNA mismatch repair MutS family.

Its function is as follows. This protein is involved in the repair of mismatches in DNA. It is possible that it carries out the mismatch recognition step. This protein has a weak ATPase activity. In Natronomonas pharaonis (strain ATCC 35678 / DSM 2160 / CIP 103997 / JCM 8858 / NBRC 14720 / NCIMB 2260 / Gabara) (Halobacterium pharaonis), this protein is DNA mismatch repair protein MutS.